The following is a 535-amino-acid chain: uncharacterized protein (535 aa).

The next 6 helical transmembrane spans lie at 55 to 75 (LITI…IPII), 82 to 102 (FMPV…IMFV), 115 to 135 (IICF…ILRH), 143 to 163 (AFVL…LMLF), 201 to 221 (STIL…TLIM), and 346 to 366 (VSGP…NVFA).

It localises to the membrane. This is an uncharacterized protein from Schizosaccharomyces pombe (strain 972 / ATCC 24843) (Fission yeast).